The following is a 366-amino-acid chain: Di-N-acetylchitobiase (366 aa).

A signal peptide spans Met-1–Ala-22. Residues Gly-23–Leu-366 form the GH18 domain. Glu-127 (proton donor) is an active-site residue. N-linked (GlcNAc...) asparagine glycans are attached at residues Asn-131, Asn-177, Asn-212, Asn-246, and Asn-283.

This sequence belongs to the glycosyl hydrolase 18 family.

It is found in the lysosome. Its function is as follows. Involved in the degradation of asparagine-linked glycoproteins. Hydrolyze of N-acetyl-beta-D-glucosamine (1-4)N-acetylglucosamine chitobiose core from the reducing end of the bond, it requires prior cleavage by glycosylasparaginase. The chain is Di-N-acetylchitobiase (Ctbs) from Mus musculus (Mouse).